Here is a 525-residue protein sequence, read N- to C-terminus: Lymphocyte activation gene 3 protein (525 aa).

An N-terminal signal peptide occupies residues 1 to 22; sequence MWEAQFLGLLFLQPLWVAPVKP. Residues 23–450 are Extracellular-facing; it reads LQPGAEVPVV…APGALPAGHL (428 aa). The 131-residue stretch at 37–167 folds into the Ig-like V-type domain; sequence GAPAQLPCSP…LSCRLRLRLG (131 aa). An interaction with FGL1 region spans residues 37–252; sequence GAPAQLPCSP…LTYRDGFNVS (216 aa). Cysteine 44 and cysteine 160 are joined by a disulfide. Residues 62–97 form a disordered region; the sequence is TWQHQPDSGPPAAAPGHPLAPGPHPAAPSSWGPRPR. Residues 69-87 are compositionally biased toward pro residues; the sequence is SGPPAAAPGHPLAPGPHPA. The region spanning 168–252 is the Ig-like C2-type 1 domain; sequence QASMTASPPG…LTYRDGFNVS (85 aa). N-linked (GlcNAc...) asparagine glycosylation occurs at asparagine 188. Cysteine 189 and cysteine 241 are disulfide-bonded. N-linked (GlcNAc...) asparagine glycosylation is found at asparagine 250 and asparagine 256. 2 Ig-like C2-type domains span residues 265–343 and 348–419; these read PTPL…QQLN and LAII…QGER. Cysteine 282 and cysteine 333 form a disulfide bridge. Asparagine 343 is a glycosylation site (N-linked (GlcNAc...) asparagine). A disulfide bridge links cysteine 369 with cysteine 412. Positions 429–450 are connecting peptide; the sequence is ELSSPGAQRSGRAPGALPAGHL. A helical transmembrane segment spans residues 451–471; that stretch reads LLFLILGVLSLLLLVTGAFGF. Over 472–525 the chain is Cytoplasmic; sequence HLWRRQWRPRRFSALEQGIHPPQAQSKIEELEQEPEPEPEPEPEPEPEPEPEQL. Residues 487–525 form a disordered region; the sequence is EQGIHPPQAQSKIEELEQEPEPEPEPEPEPEPEPEPEQL. Positions 498–503 match the KIEELE motif motif; that stretch reads KIEELE. The segment at 501–524 is 12 X 2 AA tandem repeats of E-X; that stretch reads ELEQEPEPEPEPEPEPEPEPEPEQ. The segment covering 502-525 has biased composition (acidic residues); it reads LEQEPEPEPEPEPEPEPEPEPEQL.

This sequence belongs to the LAG3 family. Interacts with MHC class II (MHC-II); selectively recognizes stable complexes of peptide and MHC-II. Interacts with FGL1 (via the Fibrinogen C-terminal domain). Proteolytically cleaved by ADAM10 and ADAM17 within the connecting peptide region, leading to release of Secreted lymphocyte activation gene 3 protein (sLAG-3). ADAM10 mediates constitutive cleavage, but cleavage increases following T-cell activation, whereas shedding by ADAM17 is induced by TCR signaling in a PRKCQ-dependent manner. In terms of tissue distribution, primarily expressed in activated T-cells and a subset of natural killer (NK) cells.

Its subcellular location is the cell membrane. The protein resides in the secreted. Lymphocyte activation gene 3 protein: Inhibitory receptor on antigen activated T-cells. Delivers inhibitory signals upon binding to ligands, such as FGL1. FGL1 constitutes a major ligand of LAG3 and is responsible for LAG3 T-cell inhibitory function. Following TCR engagement, LAG3 associates with CD3-TCR in the immunological synapse and directly inhibits T-cell activation. May inhibit antigen-specific T-cell activation in synergy with PDCD1/PD-1, possibly by acting as a coreceptor for PDCD1/PD-1. Negatively regulates the proliferation, activation, effector function and homeostasis of both CD8(+) and CD4(+) T-cells. Also mediates immune tolerance: constitutively expressed on a subset of regulatory T-cells (Tregs) and contributes to their suppressive function. Also acts as a negative regulator of plasmacytoid dendritic cell (pDCs) activation. Binds MHC class II (MHC-II); the precise role of MHC-II-binding is however unclear. Functionally, may function as a ligand for MHC class II (MHC-II) on antigen-presenting cells (APC), promoting APC activation/maturation and driving Th1 immune response. The polypeptide is Lymphocyte activation gene 3 protein (Homo sapiens (Human)).